Reading from the N-terminus, the 512-residue chain is Alpha-amylase (512 aa).

Residues 1 to 15 form the signal peptide; the sequence is MKLFVLIALFGLGFA. 3 cysteine pairs are disulfide-bonded: Cys43–Cys101, Cys85–Cys130, and Cys156–Cys175. 3 residues coordinate Ca(2+): Asn115, Arg173, and Asp182. Arg210 serves as a coordination point for chloride. Asp212 (nucleophile) is an active-site residue. His216 contributes to the Ca(2+) binding site. Catalysis depends on Glu248, which acts as the Proton donor. Arg352 serves as a coordination point for chloride. Disulfide bonds link Cys394–Cys400 and Cys466–Cys478. Asn496 carries N-linked (GlcNAc...) asparagine glycosylation.

It belongs to the glycosyl hydrolase 13 family. Ca(2+) serves as cofactor. Requires chloride as cofactor.

Its subcellular location is the secreted. The enzyme catalyses Endohydrolysis of (1-&gt;4)-alpha-D-glucosidic linkages in polysaccharides containing three or more (1-&gt;4)-alpha-linked D-glucose units.. Functionally, catalyzes the hydrolysis of alpha-1,4 glycosidic linkages in starch, glycogen and similar oligosaccharides. The sequence is that of Alpha-amylase from Oryzias latipes (Japanese rice fish).